We begin with the raw amino-acid sequence, 426 residues long: Serine--tRNA ligase (426 aa).

Residue 233–235 (TAE) participates in L-serine binding. 264–266 (RSE) contributes to the ATP binding site. Position 287 (E287) interacts with L-serine. Residue 351–354 (EISS) participates in ATP binding. S387 is a binding site for L-serine.

This sequence belongs to the class-II aminoacyl-tRNA synthetase family. Type-1 seryl-tRNA synthetase subfamily. Homodimer. The tRNA molecule binds across the dimer.

Its subcellular location is the cytoplasm. It catalyses the reaction tRNA(Ser) + L-serine + ATP = L-seryl-tRNA(Ser) + AMP + diphosphate + H(+). The catalysed reaction is tRNA(Sec) + L-serine + ATP = L-seryl-tRNA(Sec) + AMP + diphosphate + H(+). The protein operates within aminoacyl-tRNA biosynthesis; selenocysteinyl-tRNA(Sec) biosynthesis; L-seryl-tRNA(Sec) from L-serine and tRNA(Sec): step 1/1. Its function is as follows. Catalyzes the attachment of serine to tRNA(Ser). Is also able to aminoacylate tRNA(Sec) with serine, to form the misacylated tRNA L-seryl-tRNA(Sec), which will be further converted into selenocysteinyl-tRNA(Sec). In Pseudomonas aeruginosa (strain LESB58), this protein is Serine--tRNA ligase.